The sequence spans 353 residues: Phospho-N-acetylmuramoyl-pentapeptide-transferase (353 aa).

Transmembrane regions (helical) follow at residues 22–42, 65–85, 88–108, 129–149, 161–181, 192–212, 228–248, 256–276, 281–301, and 330–350; these read FAFFIALCLSLFLMPKFITWA, TPTMGGLIFISSAVIASLFCI, DNIFAISALLCLILFCLIGLI, LLAQIIAGLICILPLYFSSEL, PLFDMEIFAIAFWILVLISSS, GLATVPSIFSLSTLGIFLYLS, GLGEVVIICAALIGALMGFLW, VFMGDSGSLALGGFIGFLAII, ILLLLIGFVFVLETVSVILQV, and KIIVRFWMIALLSNLLALASI.

It belongs to the glycosyltransferase 4 family. MraY subfamily. Mg(2+) is required as a cofactor.

The protein localises to the cell inner membrane. The enzyme catalyses UDP-N-acetyl-alpha-D-muramoyl-L-alanyl-gamma-D-glutamyl-meso-2,6-diaminopimeloyl-D-alanyl-D-alanine + di-trans,octa-cis-undecaprenyl phosphate = di-trans,octa-cis-undecaprenyl diphospho-N-acetyl-alpha-D-muramoyl-L-alanyl-D-glutamyl-meso-2,6-diaminopimeloyl-D-alanyl-D-alanine + UMP. Its pathway is cell wall biogenesis; peptidoglycan biosynthesis. Catalyzes the initial step of the lipid cycle reactions in the biosynthesis of the cell wall peptidoglycan: transfers peptidoglycan precursor phospho-MurNAc-pentapeptide from UDP-MurNAc-pentapeptide onto the lipid carrier undecaprenyl phosphate, yielding undecaprenyl-pyrophosphoryl-MurNAc-pentapeptide, known as lipid I. In Campylobacter jejuni (strain RM1221), this protein is Phospho-N-acetylmuramoyl-pentapeptide-transferase.